The sequence spans 328 residues: P2Y purinoceptor 6 (328 aa).

Topologically, residues 1-27 (MEWDNGTGQALGLPPTTCVYRENFKQL) are extracellular. N-linked (GlcNAc...) asparagine glycosylation occurs at asparagine 5. The chain crosses the membrane as a helical span at residues 28–48 (LLPPVYSAVLAAGLPLNICVI). Topologically, residues 49–62 (TQICTSRRALTRTA) are cytoplasmic. The helical transmembrane segment at 63–83 (VYTLNLALADLLYACSLPLLI) threads the bilayer. Residues 84 to 101 (YNYAQGDHWPFGDFACRL) lie on the Extracellular side of the membrane. Cysteine 99 and cysteine 177 are joined by a disulfide. A helical membrane pass occupies residues 102-122 (VRFLFYANLHGSILFLTCISF). The Cytoplasmic segment spans residues 123–144 (QRYLGICHPLAPWHKRGGRRAA). Residues 145–165 (WLVCVAVWLAVTTQCLPTAIF) traverse the membrane as a helical segment. The Extracellular portion of the chain corresponds to 166–194 (AATGIQRNRTVCYDLSPPALATHYMPYGM). Residues 195 to 215 (ALTVIGFLLPFAALLACYCLL) form a helical membrane-spanning segment. Residues 216-236 (ACRLCRQDGPAEPVAQERRGK) lie on the Cytoplasmic side of the membrane. Residues 237 to 257 (AARMAVVVAAAFAISFLPFHI) form a helical membrane-spanning segment. Topologically, residues 258–280 (TKTAYLAVRSTPGVPCTVLEAFA) are extracellular. The helical transmembrane segment at 281–303 (AAYKGTRPFASANSVLDPILFYF) threads the bilayer. Residues 304 to 328 (TQKKFRRRPHELLQKLTAKWQRQGR) are Cytoplasmic-facing.

It belongs to the G-protein coupled receptor 1 family.

The protein localises to the cell membrane. Receptor for extracellular UDP &gt; UTP &gt; ATP. The activity of this receptor is mediated by G proteins which activate a phosphatidylinositol-calcium second messenger system. In Homo sapiens (Human), this protein is P2Y purinoceptor 6 (P2RY6).